Here is a 643-residue protein sequence, read N- to C-terminus: Immediate-early phosphoprotein 57 (643 aa).

Disordered stretches follow at residues 1 to 180 (MAQK…GGCA) and 194 to 329 (TGWG…QCPP). The segment covering 24 to 52 (LDFSESEEEEEEEESSSESESDEDSDMEV) has biased composition (acidic residues). Low complexity-rich tracts occupy residues 57 to 71 (QEAG…QPQQ) and 83 to 100 (QQPQ…QQQR). Residues 103 to 113 (KRGEESGDARP) are compositionally biased toward basic and acidic residues. Positions 162 to 171 (QQPQSQAAQP) are enriched in low complexity. Positions 215–241 (RRGDEDRRSGRDRRRREGRERDRESRS) are enriched in basic and acidic residues. Positions 284–297 (AGPSQAQAAQAARA) are enriched in low complexity. Over residues 298–307 (PRQEQGERRQ) the composition is skewed to basic and acidic residues. Residues 320–329 (QQCPPQQCPP) are compositionally biased toward pro residues.

It belongs to the herpesviridae UL69 family.

In Equus caballus (Horse), this protein is Immediate-early phosphoprotein 57 (57).